An 89-amino-acid polypeptide reads, in one-letter code: Small ribosomal subunit protein bS20 (89 aa).

The interval Met1 to Ser28 is disordered.

The protein belongs to the bacterial ribosomal protein bS20 family.

Functionally, binds directly to 16S ribosomal RNA. The polypeptide is Small ribosomal subunit protein bS20 (Mannheimia succiniciproducens (strain KCTC 0769BP / MBEL55E)).